A 150-amino-acid chain; its full sequence is Arginine repressor (150 aa).

It belongs to the ArgR family.

It localises to the cytoplasm. It participates in amino-acid biosynthesis; L-arginine biosynthesis [regulation]. Its function is as follows. Regulates arginine biosynthesis genes. The chain is Arginine repressor from Clostridium botulinum (strain Eklund 17B / Type B).